Here is a 138-residue protein sequence, read N- to C-terminus: Putative pre-16S rRNA nuclease (138 aa).

This sequence belongs to the YqgF nuclease family.

The protein resides in the cytoplasm. Functionally, could be a nuclease involved in processing of the 5'-end of pre-16S rRNA. The protein is Putative pre-16S rRNA nuclease of Fusobacterium nucleatum subsp. nucleatum (strain ATCC 25586 / DSM 15643 / BCRC 10681 / CIP 101130 / JCM 8532 / KCTC 2640 / LMG 13131 / VPI 4355).